Consider the following 372-residue polypeptide: Queuine tRNA-ribosyltransferase (372 aa).

D92 acts as the Proton acceptor in catalysis. Substrate-binding positions include 92–96, D146, Q188, and G215; that span reads DSGGF. An RNA binding region spans residues 246–252; sequence GIGTLRE. The active-site Nucleophile is D265. Residues 270–274 are RNA binding; important for wobble base 34 recognition; that stretch reads TRLGR. C303, C305, C308, and H334 together coordinate Zn(2+).

The protein belongs to the queuine tRNA-ribosyltransferase family. In terms of assembly, homodimer. Within each dimer, one monomer is responsible for RNA recognition and catalysis, while the other monomer binds to the replacement base PreQ1. It depends on Zn(2+) as a cofactor.

It carries out the reaction 7-aminomethyl-7-carbaguanine + guanosine(34) in tRNA = 7-aminomethyl-7-carbaguanosine(34) in tRNA + guanine. Its pathway is tRNA modification; tRNA-queuosine biosynthesis. Catalyzes the base-exchange of a guanine (G) residue with the queuine precursor 7-aminomethyl-7-deazaguanine (PreQ1) at position 34 (anticodon wobble position) in tRNAs with GU(N) anticodons (tRNA-Asp, -Asn, -His and -Tyr). Catalysis occurs through a double-displacement mechanism. The nucleophile active site attacks the C1' of nucleotide 34 to detach the guanine base from the RNA, forming a covalent enzyme-RNA intermediate. The proton acceptor active site deprotonates the incoming PreQ1, allowing a nucleophilic attack on the C1' of the ribose to form the product. After dissociation, two additional enzymatic reactions on the tRNA convert PreQ1 to queuine (Q), resulting in the hypermodified nucleoside queuosine (7-(((4,5-cis-dihydroxy-2-cyclopenten-1-yl)amino)methyl)-7-deazaguanosine). This is Queuine tRNA-ribosyltransferase from Prochlorococcus marinus (strain MIT 9313).